The following is a 227-amino-acid chain: UPF0758 protein CPE2144 (227 aa).

Residues 105–227 form the MPN domain; that stretch reads KISKPSDVAK…FISLKEKDIL (123 aa). Zn(2+) is bound by residues His176, His178, and Asp189. The JAMM motif motif lies at 176-189; that stretch reads HNHPSGDPTPSRDD.

This sequence belongs to the UPF0758 family.

In Clostridium perfringens (strain 13 / Type A), this protein is UPF0758 protein CPE2144.